The sequence spans 400 residues: Glutamyl-tRNA reductase (400 aa).

Substrate contacts are provided by residues 45 to 48 (TCNR), S103, 108 to 110 (EDQ), and Q114. The active-site Nucleophile is the C46. 179-184 (GYGEIG) contributes to the NADP(+) binding site.

The protein belongs to the glutamyl-tRNA reductase family. Homodimer.

It carries out the reaction (S)-4-amino-5-oxopentanoate + tRNA(Glu) + NADP(+) = L-glutamyl-tRNA(Glu) + NADPH + H(+). It functions in the pathway porphyrin-containing compound metabolism; protoporphyrin-IX biosynthesis; 5-aminolevulinate from L-glutamyl-tRNA(Glu): step 1/2. Its function is as follows. Catalyzes the NADPH-dependent reduction of glutamyl-tRNA(Glu) to glutamate 1-semialdehyde (GSA). The sequence is that of Glutamyl-tRNA reductase from Clostridium perfringens (strain 13 / Type A).